Here is a 428-residue protein sequence, read N- to C-terminus: MTRRRSAPASWLLVSLLGVATSLEVSESPGSVQVARGQTAVLPCAFSTSAALLNLNVIWMVIPLSNANQPEQVILYQGGQMFDGALRFHGRVGFTGTMPATNVSIFINNTQLSDTGTYQCLVNNLPDRGGRNIGVTGLTVLVPPSAPQCQIQGSQDLGSDVILLCSSEEGIPRPTYLWEKLDNTLKLPPTATQDQVQGTVTIRNISALSSGLYQCVASNAIGTSTCLLDLQVISPQPRSVGVIAGAVGTGAVLIVICLALISGAFFYWRSKNKEEEEEEIPNEIREDDLPPKCSSAKAFHTEISSSENNTLTSSNTYNSRYWNNNPKPHRNTESFNHFSDLRQSFSGNAVIPSIYANGNHLVLGPHKTLVVTANRGSSPQVLPRNNGSVSRKPWPQHTHSYTVSQMTLERIGAVPVMVPAQSRAGSLV.

An N-terminal signal peptide occupies residues Met-1–Ser-22. Residues Leu-23–Thr-136 enclose the Ig-like V-type domain. Residues Leu-23–Val-240 lie on the Extracellular side of the membrane. 2 cysteine pairs are disulfide-bonded: Cys-44/Cys-120 and Cys-165/Cys-215. N-linked (GlcNAc...) asparagine glycosylation is present at Asn-102. In terms of domain architecture, Ig-like C2-type spans Pro-144–Ser-234. A helical membrane pass occupies residues Gly-241–Ile-261. The Cytoplasmic segment spans residues Ser-262–Val-428. Arg-375 carries the omega-N-methylarginine modification. The span at Gly-376–Val-389 shows a compositional bias: polar residues. The interval Gly-376 to Gln-396 is disordered.

N-glycosylated. In terms of tissue distribution, highly expressed in testis and detected in kidney and adrenal gland. In brain, expressed in commissure fibers of the corpus callosum and pyramidal cell layers of the dentate gyrus and hippocampus where it is probably expressed by both neurons and glial cells.

The protein localises to the cell membrane. In terms of biological role, functions as a cell adhesion molecule through homophilic interaction. Stimulates cell growth. The polypeptide is Immunoglobulin superfamily member 11 (Igsf11) (Mus musculus (Mouse)).